The sequence spans 552 residues: CTP synthase (552 aa).

Residues 1 to 270 (MTKYVFVTGG…DRIICDELKL (270 aa)) form an amidoligase domain region. Serine 13 contributes to the CTP binding site. A UTP-binding site is contributed by serine 13. ATP contacts are provided by residues 14–19 (SLGKGI) and aspartate 71. Mg(2+) is bound by residues aspartate 71 and glutamate 144. Residues 151–153 (DIE), 191–196 (KTKPTQ), and lysine 227 contribute to the CTP site. UTP contacts are provided by residues 191–196 (KTKPTQ) and lysine 227. Residues 295–547 (TIGMVGKYVD…VEAALANKQA (253 aa)) form the Glutamine amidotransferase type-1 domain. Residue glycine 356 coordinates L-glutamine. Catalysis depends on cysteine 383, which acts as the Nucleophile; for glutamine hydrolysis. L-glutamine contacts are provided by residues 384-387 (LGMQ), glutamate 407, and arginine 473. Active-site residues include histidine 520 and glutamate 522.

This sequence belongs to the CTP synthase family. Homotetramer.

It carries out the reaction UTP + L-glutamine + ATP + H2O = CTP + L-glutamate + ADP + phosphate + 2 H(+). It catalyses the reaction L-glutamine + H2O = L-glutamate + NH4(+). The catalysed reaction is UTP + NH4(+) + ATP = CTP + ADP + phosphate + 2 H(+). The protein operates within pyrimidine metabolism; CTP biosynthesis via de novo pathway; CTP from UDP: step 2/2. Allosterically activated by GTP, when glutamine is the substrate; GTP has no effect on the reaction when ammonia is the substrate. The allosteric effector GTP functions by stabilizing the protein conformation that binds the tetrahedral intermediate(s) formed during glutamine hydrolysis. Inhibited by the product CTP, via allosteric rather than competitive inhibition. In terms of biological role, catalyzes the ATP-dependent amination of UTP to CTP with either L-glutamine or ammonia as the source of nitrogen. Regulates intracellular CTP levels through interactions with the four ribonucleotide triphosphates. The chain is CTP synthase from Burkholderia vietnamiensis (strain G4 / LMG 22486) (Burkholderia cepacia (strain R1808)).